A 293-amino-acid chain; its full sequence is Shikimate dehydrogenase (NADP(+)) (293 aa).

Shikimate-binding positions include 20–22 (SLT) and T72. K76 functions as the Proton acceptor in the catalytic mechanism. Shikimate contacts are provided by N97 and D112. Residues 136–140 (GAGGA) and I230 contribute to the NADP(+) site. Y232 provides a ligand contact to shikimate. G253 lines the NADP(+) pocket.

It belongs to the shikimate dehydrogenase family. In terms of assembly, homodimer.

It catalyses the reaction shikimate + NADP(+) = 3-dehydroshikimate + NADPH + H(+). Its pathway is metabolic intermediate biosynthesis; chorismate biosynthesis; chorismate from D-erythrose 4-phosphate and phosphoenolpyruvate: step 4/7. Its function is as follows. Involved in the biosynthesis of the chorismate, which leads to the biosynthesis of aromatic amino acids. Catalyzes the reversible NADPH linked reduction of 3-dehydroshikimate (DHSA) to yield shikimate (SA). This is Shikimate dehydrogenase (NADP(+)) from Arthrobacter sp. (strain FB24).